The chain runs to 208 residues: Small ribosomal subunit protein uS4 (208 aa).

An S4 RNA-binding domain is found at 98–161; it reads RRLDNVIYRL…RKIPVIAEAQ (64 aa).

This sequence belongs to the universal ribosomal protein uS4 family. Part of the 30S ribosomal subunit. Contacts protein S5. The interaction surface between S4 and S5 is involved in control of translational fidelity.

One of the primary rRNA binding proteins, it binds directly to 16S rRNA where it nucleates assembly of the body of the 30S subunit. Its function is as follows. With S5 and S12 plays an important role in translational accuracy. The chain is Small ribosomal subunit protein uS4 from Nitratidesulfovibrio vulgaris (strain DSM 19637 / Miyazaki F) (Desulfovibrio vulgaris).